The following is a 481-amino-acid chain: Aspartyl/glutamyl-tRNA(Asn/Gln) amidotransferase subunit B (481 aa).

Belongs to the GatB/GatE family. GatB subfamily. As to quaternary structure, heterotrimer of A, B and C subunits.

It carries out the reaction L-glutamyl-tRNA(Gln) + L-glutamine + ATP + H2O = L-glutaminyl-tRNA(Gln) + L-glutamate + ADP + phosphate + H(+). It catalyses the reaction L-aspartyl-tRNA(Asn) + L-glutamine + ATP + H2O = L-asparaginyl-tRNA(Asn) + L-glutamate + ADP + phosphate + 2 H(+). Functionally, allows the formation of correctly charged Asn-tRNA(Asn) or Gln-tRNA(Gln) through the transamidation of misacylated Asp-tRNA(Asn) or Glu-tRNA(Gln) in organisms which lack either or both of asparaginyl-tRNA or glutaminyl-tRNA synthetases. The reaction takes place in the presence of glutamine and ATP through an activated phospho-Asp-tRNA(Asn) or phospho-Glu-tRNA(Gln). The polypeptide is Aspartyl/glutamyl-tRNA(Asn/Gln) amidotransferase subunit B (Pseudomonas putida (strain ATCC 47054 / DSM 6125 / CFBP 8728 / NCIMB 11950 / KT2440)).